Reading from the N-terminus, the 241-residue chain is Agamous-like MADS-box protein AP1 (241 aa).

The MADS-box domain maps to 1–61; the sequence is MGRGRVQLKR…GKLFEYSTDS (61 aa). Residues 88–178 enclose the K-box domain; it reads QGNWSLEYSK…AKEIKEKEKT (91 aa).

In terms of tissue distribution, expressed in tendrils and flowers.

The protein localises to the nucleus. In terms of biological role, probable transcription factor involved in flower development. The polypeptide is Agamous-like MADS-box protein AP1 (Vitis vinifera (Grape)).